The sequence spans 430 residues: Divergent protein kinase domain 2A (430 aa).

An N-terminal signal peptide occupies residues 1-35 (MWRLVPLKLGRLSRALKLAALGSLLVLMLLHSPSL).

Belongs to the DIPK family. Expressed in heart, brain, liver, spleen, kidney, lung, thymus, testis, ovary and muscle.

Its subcellular location is the golgi apparatus. It localises to the cytoplasmic vesicle. The protein resides in the COPI-coated vesicle. It is found in the secreted. May play a role in cardiomyocyte proliferation through paracrine signaling and activation of the PI3-kinase signaling cascade. In Mus musculus (Mouse), this protein is Divergent protein kinase domain 2A (Dipk2a).